Reading from the N-terminus, the 225-residue chain is Transcription factor HES-7 (225 aa).

The bHLH domain maps to 12–69 (GPKMLKPLVEKRRRDRINRSLEELRLLLLERTRDQNLRNPKLEKAEILEFAVGYLRER). The Orange domain occupies 92–122 (YLSGFRECLLRLAAFAHDASPAARAQLFSAL). The interval 125–225 (YLRPKPPRPK…PPPAFWRPWP (101 aa)) is disordered. Residues 147–158 (LDPAAPALGPAL) are compositionally biased toward low complexity. Residues 212–225 (APLPPPPAFWRPWP) are compositionally biased toward pro residues. A WRPW motif motif is present at residues 221–224 (WRPW).

As to quaternary structure, transcription repression requires formation of a complex with a corepressor protein of the Groucho/TLE family.

The protein localises to the nucleus. Transcriptional repressor. Represses transcription from both N box- and E box-containing promoters. May with HES1, cooperatively regulate somite formation in the presomitic mesoderm (PSM). May function as a segmentation clock, which is essential for coordinated somite segmentation. This Homo sapiens (Human) protein is Transcription factor HES-7 (HES7).